A 311-amino-acid chain; its full sequence is tRNA-cytidine(32) 2-sulfurtransferase (311 aa).

A PP-loop motif motif is present at residues 45–50; the sequence is SGGKDS. [4Fe-4S] cluster is bound by residues cysteine 120, cysteine 123, and cysteine 211.

Belongs to the TtcA family. Homodimer. Requires Mg(2+) as cofactor. It depends on [4Fe-4S] cluster as a cofactor.

It is found in the cytoplasm. It carries out the reaction cytidine(32) in tRNA + S-sulfanyl-L-cysteinyl-[cysteine desulfurase] + AH2 + ATP = 2-thiocytidine(32) in tRNA + L-cysteinyl-[cysteine desulfurase] + A + AMP + diphosphate + H(+). Its pathway is tRNA modification. In terms of biological role, catalyzes the ATP-dependent 2-thiolation of cytidine in position 32 of tRNA, to form 2-thiocytidine (s(2)C32). The sulfur atoms are provided by the cysteine/cysteine desulfurase (IscS) system. The sequence is that of tRNA-cytidine(32) 2-sulfurtransferase from Shewanella pealeana (strain ATCC 700345 / ANG-SQ1).